A 153-amino-acid polypeptide reads, in one-letter code: Transcriptional repressor NrdR (153 aa).

Residues 3–34 (CPSCQHHGTRVLDSRPVDEGRSIRRRRECEQC) fold into a zinc finger. The ATP-cone domain maps to 49–139 (LIVVKKQGMR…VYRQFKDLNV (91 aa)).

It belongs to the NrdR family. Zn(2+) is required as a cofactor.

Functionally, negatively regulates transcription of bacterial ribonucleotide reductase nrd genes and operons by binding to NrdR-boxes. This is Transcriptional repressor NrdR from Geobacillus sp. (strain WCH70).